A 154-amino-acid polypeptide reads, in one-letter code: 17.4 kDa class I heat shock protein (154 aa).

One can recognise a sHSP domain in the interval 40–154 (DAAAFAGARI…PDVKSIQITG (115 aa)).

The protein belongs to the small heat shock protein (HSP20) family. As to quaternary structure, may form oligomeric structures.

The protein localises to the cytoplasm. The protein is 17.4 kDa class I heat shock protein (HSP17.4) of Oryza sativa subsp. japonica (Rice).